A 357-amino-acid chain; its full sequence is UDP-N-acetylglucosamine--N-acetylmuramyl-(pentapeptide) pyrophosphoryl-undecaprenol N-acetylglucosamine transferase (357 aa).

UDP-N-acetyl-alpha-D-glucosamine-binding positions include 13-15 (TGG), Asn125, Arg161, Ser189, Ile243, and Gln288.

Belongs to the glycosyltransferase 28 family. MurG subfamily.

The protein resides in the cell inner membrane. The catalysed reaction is di-trans,octa-cis-undecaprenyl diphospho-N-acetyl-alpha-D-muramoyl-L-alanyl-D-glutamyl-meso-2,6-diaminopimeloyl-D-alanyl-D-alanine + UDP-N-acetyl-alpha-D-glucosamine = di-trans,octa-cis-undecaprenyl diphospho-[N-acetyl-alpha-D-glucosaminyl-(1-&gt;4)]-N-acetyl-alpha-D-muramoyl-L-alanyl-D-glutamyl-meso-2,6-diaminopimeloyl-D-alanyl-D-alanine + UDP + H(+). It functions in the pathway cell wall biogenesis; peptidoglycan biosynthesis. Its function is as follows. Cell wall formation. Catalyzes the transfer of a GlcNAc subunit on undecaprenyl-pyrophosphoryl-MurNAc-pentapeptide (lipid intermediate I) to form undecaprenyl-pyrophosphoryl-MurNAc-(pentapeptide)GlcNAc (lipid intermediate II). This is UDP-N-acetylglucosamine--N-acetylmuramyl-(pentapeptide) pyrophosphoryl-undecaprenol N-acetylglucosamine transferase from Bordetella pertussis (strain Tohama I / ATCC BAA-589 / NCTC 13251).